The following is a 225-amino-acid chain: 2-amino-5-formylamino-6-ribosylaminopyrimidin-4(3H)-one 5'-monophosphate deformylase (225 aa).

Glu-28, His-30, Asp-39, and His-107 together coordinate Fe cation.

This sequence belongs to the creatininase superfamily. FAPy deformylase family. As to quaternary structure, homodimer. Requires Fe(2+) as cofactor. It depends on Zn(2+) as a cofactor.

It carries out the reaction 2-amino-5-formylamino-6-(5-phospho-D-ribosylamino)pyrimidin-4(3H)-one + H2O = 2,5-diamino-6-(1-D-ribosylamino)pyrimidin-4(3H)-one 5'-phosphate + formate + H(+). It functions in the pathway cofactor biosynthesis; coenzyme F420 biosynthesis. The protein operates within cofactor biosynthesis; riboflavin biosynthesis. Catalyzes the hydrolysis of the formamide of 2-amino-5-formylamino-6-ribosylamino-4(3H)-pyrimidinone 5'-monophosphate (FAPy) to form 2,5-diamino-6-ribosylamino-4(3H)-pyrimidinone 5'-phosphate (APy). This chain is 2-amino-5-formylamino-6-ribosylaminopyrimidin-4(3H)-one 5'-monophosphate deformylase, found in Methanocaldococcus sp. (strain FS406-22).